The chain runs to 833 residues: MSGVVLLVLAIILITIFSLIYYTIFFEFDETTFSKRLRVLTEYAKRTNADKPTPDVLGHVSDVYDHTYIVSWFRTNDLSTYHETVHDDTVEVFDFLEQQFSGAQATVTQRVAPVAAELDAFVVTNDAGDVKLRCPQNFSFDYGQLKCVPEDPCSGRPPGRYPMNELLLDTLVHNQHSDKNYSAGAHLYHPTLYLRCLANGSHAVRECPDNYTFDAEAGECRVNELCEGRPDGFVLPYFPEALLVNEFVECRNGEHVVAQCADGQVFDRALMTCVHAHPCAFNGAGHTYITSDIGDTQFFKCLNNHEAQLVTCINRAHGADGQYACSGDARCADLPKGTGQLVHIHTDDTFEYASGQMICDNYEVVSEINCDTGDVLGDKLFINKFKLNVQFPLEVLEFGACAPATLNNVSVLNDTFPIENAPNDYGVNMQTSVVGRTSMVAKLMAGDDPDTAFGENVLLARDVNTVGLNPFTAEPIDCFGAQLYDVMDAHRANVCTESGNDLLKTVEFGDGAFLSVFRDDLTGSDADYKQFCAISYESPLKIVKSDHFQRRILTNILQSDICADLYTTIYQKYTTLARKYTTSPVQYNYTFVKRPENMVVYAKNTRFKNATISEPAFDLFAAQTTDKENGFARSLFDPFADGVWRSEPGGDGDHWAPEVPPTQPEPELEPESETELDSDLELEPEFSPLILNKKDLFYSCFYELPSFKLSSCHAENDVIVDALQQLRASVKVDTECELAKDLHFVLNAYAYTGNNIGCRSVFDGDDVAVVKEPVPSYVFTNLQTQSNDGVRYNKHVHVKDGRYMACPEHLYDDEAFACNAEPDKLYYLENMQQ.

Positions 1-18 are cleaved as a signal peptide; the sequence is MSGVVLLVLAIILITIFS. Asn-137, Asn-180, Asn-199, and Asn-210 each carry an N-linked (GlcNAc...) asparagine; by host glycan. A C2HC BV-type zinc finger spans residues 147–196; the sequence is CVPEDPCSGRPPGRYPMNELLLDTLVHNQHSDKNYSAGAHLYHPTLYLRC. 2 disulfide bridges follow: Cys-207/Cys-220 and Cys-260/Cys-273. The region spanning 223 to 281 is the Chitin-binding type-2 domain; that stretch reads NELCEGRPDGFVLPYFPEALLVNEFVECRNGEHVVAQCADGQVFDRALMTCVHAHPCAF. N-linked (GlcNAc...) asparagine; by host glycans are attached at residues Asn-408, Asn-413, Asn-588, and Asn-609. Positions 647–673 are disordered; that stretch reads EPGGDGDHWAPEVPPTQPEPELEPESE.

The protein resides in the virion. In terms of biological role, probable capsid-associated protein. The protein is Capsid-associated protein Vp91 of Choristoneura fumiferana nuclear polyhedrosis virus (CfMNPV).